The following is a 34-amino-acid chain: Photosystem II reaction center protein M (34 aa).

Residues 7–27 (GFVATLLFVLVPAIFLIILYI) traverse the membrane as a helical segment.

Belongs to the PsbM family. As to quaternary structure, PSII is composed of 1 copy each of membrane proteins PsbA, PsbB, PsbC, PsbD, PsbE, PsbF, PsbH, PsbI, PsbJ, PsbK, PsbL, PsbM, PsbT, PsbX, PsbY, PsbZ, Psb30/Ycf12, peripheral proteins PsbO, CyanoQ (PsbQ), PsbU, PsbV and a large number of cofactors. It forms dimeric complexes.

Its subcellular location is the cellular thylakoid membrane. In terms of biological role, one of the components of the core complex of photosystem II (PSII). PSII is a light-driven water:plastoquinone oxidoreductase that uses light energy to abstract electrons from H(2)O, generating O(2) and a proton gradient subsequently used for ATP formation. It consists of a core antenna complex that captures photons, and an electron transfer chain that converts photonic excitation into a charge separation. This subunit is found at the monomer-monomer interface. This Synechococcus sp. (strain RCC307) protein is Photosystem II reaction center protein M.